The primary structure comprises 526 residues: Probable Xaa-Pro aminopeptidase MGG_05684 (526 aa).

4 residues coordinate Mn(2+): Asp-285, Asp-296, Glu-447, and Glu-488.

This sequence belongs to the peptidase M24B family. It depends on Mn(2+) as a cofactor.

It catalyses the reaction Release of any N-terminal amino acid, including proline, that is linked to proline, even from a dipeptide or tripeptide.. In terms of biological role, catalyzes the removal of a penultimate prolyl residue from the N-termini of peptides. This Pyricularia oryzae (strain 70-15 / ATCC MYA-4617 / FGSC 8958) (Rice blast fungus) protein is Probable Xaa-Pro aminopeptidase MGG_05684.